A 205-amino-acid polypeptide reads, in one-letter code: MKNYHDIVLALAGVCQSAKLVHQLATESRADSDTFLTALNSLFITQPQRIEDVFGGEVRHLKLGLETLIHQLNAQGDQNLTRYWLSLLALEGKLSKNSDAKQTLGNRISRLKEQEIHYARDSETMLSIMANIYSDIISPLGKKIHILGSPDYLRQELVQNKIRAVLLAGIRSAVLWKQMGGTKWQILFFRRKLLATAKQIYSSIY.

It belongs to the HflD family.

Its subcellular location is the cytoplasm. The protein resides in the cell inner membrane. The chain is High frequency lysogenization protein HflD homolog from Haemophilus influenzae (strain 86-028NP).